Here is a 185-residue protein sequence, read N- to C-terminus: Crossover junction endodeoxyribonuclease RuvC (185 aa).

Residues Asp-16, Glu-75, and Asp-147 contribute to the active site. Residues Asp-16, Glu-75, and Asp-147 each coordinate Mg(2+).

This sequence belongs to the RuvC family. In terms of assembly, homodimer which binds Holliday junction (HJ) DNA. The HJ becomes 2-fold symmetrical on binding to RuvC with unstacked arms; it has a different conformation from HJ DNA in complex with RuvA. In the full resolvosome a probable DNA-RuvA(4)-RuvB(12)-RuvC(2) complex forms which resolves the HJ. Mg(2+) is required as a cofactor.

The protein resides in the cytoplasm. It catalyses the reaction Endonucleolytic cleavage at a junction such as a reciprocal single-stranded crossover between two homologous DNA duplexes (Holliday junction).. In terms of biological role, the RuvA-RuvB-RuvC complex processes Holliday junction (HJ) DNA during genetic recombination and DNA repair. Endonuclease that resolves HJ intermediates. Cleaves cruciform DNA by making single-stranded nicks across the HJ at symmetrical positions within the homologous arms, yielding a 5'-phosphate and a 3'-hydroxyl group; requires a central core of homology in the junction. The consensus cleavage sequence is 5'-(A/T)TT(C/G)-3'. Cleavage occurs on the 3'-side of the TT dinucleotide at the point of strand exchange. HJ branch migration catalyzed by RuvA-RuvB allows RuvC to scan DNA until it finds its consensus sequence, where it cleaves and resolves the cruciform DNA. This chain is Crossover junction endodeoxyribonuclease RuvC, found in Aromatoleum aromaticum (strain DSM 19018 / LMG 30748 / EbN1) (Azoarcus sp. (strain EbN1)).